Here is a 133-residue protein sequence, read N- to C-terminus: MHQLIREIEQKYLPQDIPEFKVGDTVRLHLKVKEGEKERTQIFEGLVIRVRGSGTGKTFTVRKVSYGVGMERIFPIACPSIQKIEVVKRGKVRRAKLYYIRNLKGKAAKIKELKEWEIKKRQAESQASKENNG.

Belongs to the bacterial ribosomal protein bL19 family.

Its function is as follows. This protein is located at the 30S-50S ribosomal subunit interface and may play a role in the structure and function of the aminoacyl-tRNA binding site. The protein is Large ribosomal subunit protein bL19 of Sulfurihydrogenibium sp. (strain YO3AOP1).